The chain runs to 575 residues: MESITRVSMSVCPFVKSSSAQALRQLSKNSALTSQARQCPFMGAALNAKESTRSYSSATKPVRATASSLASNPPSTMQSKYSFKAEELVGNKDAINLESKENTFDFKGYLNSELSKKRTDKSYRFFNNINRLANEFPKAHRSEENDKVTVWCSNDYLGMGKNENTINEMKRVLTKYGSGAGGTRNIAGHNIHALKLESELAALHKHEAALVFSSCFVANDAVLSLFGQKIKDLVIFSDELNHASMIQGIRNSRAKKQVFKHNDLADLEEKLAQYPKSTPKLIAFESVYSMCGSIAPIEAICDLAEKYGALTFLDEVHAVGMYGPHGAGVAEHLDFDAHLKSGIASPQTQTVMNRVDMVTGTLGKAYGTVGGYITGKANLIDWFRSFAPGFIFTTTLPPSIMAGSSASIRYQRSTLQDRIAQQTNTRYVKNNLTDIGIPVIPNPSHIVPVLVGNALDAKKASDLLLDKYNIYVQAINFPTVPIGQERLRITPTPGHGPELSNQLIGALDSVFNELSLSRIGDWEGKGGLCGVGEPDIEPIEHIWTSEQLALTDADINPNVIDPVIQPIGVSSGVRD.

The N-terminal 55 residues, 1–55, are a transit peptide targeting the mitochondrion; it reads MESITRVSMSVCPFVKSSSAQALRQLSKNSALTSQARQCPFMGAALNAKESTRSY. Arg-124, Ser-237, and Lys-256 together coordinate substrate. Positions 289, 317, and 361 each coordinate pyridoxal 5'-phosphate. Lys-364 is an active-site residue. Lys-364 bears the N6-(pyridoxal phosphate)lysine mark. Residues Thr-393 and Thr-394 each coordinate pyridoxal 5'-phosphate. Thr-479 serves as a coordination point for substrate.

The protein belongs to the class-II pyridoxal-phosphate-dependent aminotransferase family. Homodimer. The cofactor is pyridoxal 5'-phosphate.

Its subcellular location is the mitochondrion matrix. The enzyme catalyses succinyl-CoA + glycine + H(+) = 5-aminolevulinate + CO2 + CoA. The protein operates within porphyrin-containing compound metabolism; protoporphyrin-IX biosynthesis; 5-aminolevulinate from glycine: step 1/1. Its function is as follows. Catalyzes the synthesis of 5-aminolevulinate (ALA) from succinyl-CoA and glycine, the first and rate-limiting step in heme biosynthesis. This is 5-aminolevulinate synthase, mitochondrial (HEM1) from Debaryomyces hansenii (strain ATCC 36239 / CBS 767 / BCRC 21394 / JCM 1990 / NBRC 0083 / IGC 2968) (Yeast).